Reading from the N-terminus, the 128-residue chain is Cytochrome c-type biogenesis protein CcmE (128 aa).

Topologically, residues 1–7 are cytoplasmic; sequence MKKKHKR. The helical; Signal-anchor for type II membrane protein transmembrane segment at 8–28 threads the bilayer; the sequence is LLVASGIFFFLNCIVFFILTI. The Extracellular portion of the chain corresponds to 29 to 128; sequence LRENISFFYT…KHDENYMPRK (100 aa). Heme contacts are provided by histidine 120 and tyrosine 124.

The protein belongs to the CcmE/CycJ family.

Its subcellular location is the cell membrane. Its function is as follows. Heme chaperone required for the biogenesis of c-type cytochromes. Transiently binds heme delivered by CcmC and transfers the heme to apo-cytochromes in a process facilitated by CcmF and CcmH. The chain is Cytochrome c-type biogenesis protein CcmE from Wolbachia sp. subsp. Brugia malayi (strain TRS).